Consider the following 265-residue polypeptide: NADH dehydrogenase [ubiquinone] iron-sulfur protein 3, mitochondrial (265 aa).

The transit peptide at 1-33 directs the protein to the mitochondrion; sequence MAALIRNLGARAAVAALSAKHVVPAAGSTALRM.

It belongs to the complex I 30 kDa subunit family. As to quaternary structure, part of the mitochondrial membrane respiratory chain NADH dehydrogenase (Complex I). Interacts with sicily; interaction is stronger with unprocessed sicily protein.

Its subcellular location is the mitochondrion. The catalysed reaction is a ubiquinone + NADH + 5 H(+)(in) = a ubiquinol + NAD(+) + 4 H(+)(out). Functionally, core subunit of the mitochondrial membrane respiratory chain NADH dehydrogenase (Complex I) that is believed to belong to the minimal assembly required for catalysis. Complex I functions in the transfer of electrons from NADH to the respiratory chain. The immediate electron acceptor for the enzyme is believed to be ubiquinone. The sequence is that of NADH dehydrogenase [ubiquinone] iron-sulfur protein 3, mitochondrial from Drosophila melanogaster (Fruit fly).